The following is a 314-amino-acid chain: Olfactory receptor 8D4 (314 aa).

Residues 1 to 25 (MGVKNHSTVTEFLLSGLTEQAELQL) lie on the Extracellular side of the membrane. A glycan (N-linked (GlcNAc...) asparagine) is linked at Asn5. A helical membrane pass occupies residues 26–46 (PLFCLFLGIYTVTVVGNLSMI). The Cytoplasmic segment spans residues 47–54 (SIIRLNRQ). A helical membrane pass occupies residues 55-75 (LHTPMYYFLSSLSFLDFCYSS). Residues 76 to 99 (VITPKMLSGFLCRDRSISYSGCMI) lie on the Extracellular side of the membrane. A disulfide bridge connects residues Cys97 and Cys189. A helical membrane pass occupies residues 100 to 120 (QLFFFCVCVISECYMLAAMAC). The Cytoplasmic segment spans residues 121 to 139 (DRYVAICSPLLYRVIMSPR). The chain crosses the membrane as a helical span at residues 140–160 (VCSLLVAAVFSVGFTDAVIHG). Residues 161–197 (GCILRLSFCGSNIIKHYFCDIVPLIKLSCSSTYIDEL) are Extracellular-facing. A helical transmembrane segment spans residues 198-217 (LIFVIGGFNMVATSLTIIIS). Residues 218–237 (YAFILTSILRIHSKKGRCKA) lie on the Cytoplasmic side of the membrane. The helical transmembrane segment at 238 to 258 (FSTCSSHLTAVLMFYGSLMSM) threads the bilayer. Topologically, residues 259-271 (YLKPASSSSLTQE) are extracellular. The helical transmembrane segment at 272 to 292 (KVSSVFYTTVILMLNPLIYSL) threads the bilayer. The Cytoplasmic portion of the chain corresponds to 293–314 (RNNEVRNALMKLLRRKISLSPG).

This sequence belongs to the G-protein coupled receptor 1 family.

Its subcellular location is the cell membrane. Functionally, odorant receptor. This is Olfactory receptor 8D4 (OR8D4) from Homo sapiens (Human).